A 657-amino-acid polypeptide reads, in one-letter code: Iron-sulfur cluster biogenesis chaperone, mitochondrial (657 aa).

Belongs to the heat shock protein 70 family. In terms of assembly, interacts with the Fe/S cluster assembly proteins ISU1, MGE1, GRX5 and JAC1.

It is found in the mitochondrion matrix. It catalyses the reaction ATP + H2O = ADP + phosphate + H(+). In terms of biological role, required for the assembly of iron-sulfur (Fe/S) clusters in mitochondria. Assisted by the DnaJ-like co-chaperone JAC1 and the nucleotide exchange factor MGE1, it mediates ATP-dependent Fe-S cluster transfer from the scaffold proteins ISU1/ISU2 to GRX5. The chain is Iron-sulfur cluster biogenesis chaperone, mitochondrial from Saccharomyces cerevisiae (strain ATCC 204508 / S288c) (Baker's yeast).